Consider the following 727-residue polypeptide: Procollagen-lysine,2-oxoglutarate 5-dioxygenase 1 (727 aa).

A signal peptide spans 1–18 (MRPLLLLAPLGWLLLAEA). Residues asparagine 163, asparagine 197, and asparagine 538 are each glycosylated (N-linked (GlcNAc...) asparagine). The Fe2OG dioxygenase domain maps to 636–727 (QFDLAFVVRY…RYIAVSFVDP (92 aa)). Fe cation contacts are provided by histidine 656 and aspartate 658. A glycan (N-linked (GlcNAc...) asparagine) is linked at asparagine 686. Histidine 708 provides a ligand contact to Fe cation. The active site involves arginine 718.

As to quaternary structure, homodimer. Identified in a complex with P3H3 and P3H4. Fe(2+) is required as a cofactor. The cofactor is L-ascorbate.

Its subcellular location is the rough endoplasmic reticulum membrane. The enzyme catalyses L-lysyl-[collagen] + 2-oxoglutarate + O2 = (5R)-5-hydroxy-L-lysyl-[collagen] + succinate + CO2. In terms of biological role, part of a complex composed of PLOD1, P3H3 and P3H4 that catalyzes hydroxylation of lysine residues in collagen alpha chains and is required for normal assembly and cross-linkling of collagen fibrils. Forms hydroxylysine residues in -Xaa-Lys-Gly- sequences in collagens. These hydroxylysines serve as sites of attachment for carbohydrate units and are essential for the stability of the intermolecular collagen cross-links. This chain is Procollagen-lysine,2-oxoglutarate 5-dioxygenase 1 (PLOD1), found in Pongo abelii (Sumatran orangutan).